The chain runs to 91 residues: Sec-independent protein translocase protein TatA (91 aa).

Residues methionine 1–glycine 21 traverse the membrane as a helical segment. The tract at residues glycine 42–valine 91 is disordered.

This sequence belongs to the TatA/E family. As to quaternary structure, the Tat system comprises two distinct complexes: a TatABC complex, containing multiple copies of TatA, TatB and TatC subunits, and a separate TatA complex, containing only TatA subunits. Substrates initially bind to the TatABC complex, which probably triggers association of the separate TatA complex to form the active translocon.

It localises to the cell inner membrane. Part of the twin-arginine translocation (Tat) system that transports large folded proteins containing a characteristic twin-arginine motif in their signal peptide across membranes. TatA could form the protein-conducting channel of the Tat system. In Methylorubrum populi (strain ATCC BAA-705 / NCIMB 13946 / BJ001) (Methylobacterium populi), this protein is Sec-independent protein translocase protein TatA.